A 525-amino-acid chain; its full sequence is uncharacterized protein (525 aa).

A signal peptide spans 1–21 (MLECLSALLVLFAGGGGSVLA). Topologically, residues 22–448 (AVQSKTVADP…ISAASQLDKR (427 aa)) are extracellular. Positions 242–264 (KVSSENCSKDTDDKSGSKKERNT) are disordered. The chain crosses the membrane as a helical span at residues 449-469 (IFIFTAITVSITTLMMLGFSY). The Cytoplasmic segment spans residues 470 to 525 (RSRVSFRDHSIDDSDDDNDWSDDEVEFDEEYFYSLPVSIPEKGISLDKMAQQLGVE).

It is found in the membrane. This is an uncharacterized protein from Saccharomyces cerevisiae (strain ATCC 204508 / S288c) (Baker's yeast).